Here is a 265-residue protein sequence, read N- to C-terminus: Phosphonates import ATP-binding protein PhnC (265 aa).

The 245-residue stretch at 18–262 folds into the ABC transporter domain; sequence LVVEHLRKEY…HLKQIYGGEE (245 aa). 51–58 provides a ligand contact to ATP; it reads GPSGTGKS.

Belongs to the ABC transporter superfamily. Phosphonates importer (TC 3.A.1.9.1) family. In terms of assembly, the complex is composed of two ATP-binding proteins (PhnC), two transmembrane proteins (PhnE) and a solute-binding protein (PhnD).

Its subcellular location is the cell inner membrane. It carries out the reaction phosphonate(out) + ATP + H2O = phosphonate(in) + ADP + phosphate + H(+). Functionally, part of the ABC transporter complex PhnCDE involved in phosphonates import. Responsible for energy coupling to the transport system. The chain is Phosphonates import ATP-binding protein PhnC from Nitratidesulfovibrio vulgaris (strain ATCC 29579 / DSM 644 / CCUG 34227 / NCIMB 8303 / VKM B-1760 / Hildenborough) (Desulfovibrio vulgaris).